Here is a 1334-residue protein sequence, read N- to C-terminus: SCAR-like protein 2 (1334 aa).

A compositionally biased stretch (basic and acidic residues) spans 197–207 (KTGNFQREKKS). Disordered stretches follow at residues 197-281 (KTGN…SSFS), 294-331 (DTKP…GTSA), 481-516 (PDSS…ADAP), 568-602 (PNQS…SSYT), 643-668 (DKPT…TVES), 791-832 (STSH…KNII), 931-956 (FEKK…YSEK), 1000-1026 (FQLL…GRSY), 1248-1268 (SGQQ…DTKN), and 1280-1304 (RSKT…TANS). Residues 241-256 (VQLTSRHFATPSTDGR) are compositionally biased toward polar residues. Residues 310-319 (SNNNLHKLSN) show a composition bias toward low complexity. Polar residues predominate over residues 320 to 330 (TPLHTRLNGTS). Basic and acidic residues predominate over residues 574–595 (DSKEIPDSKAEDAPIDSPEKLE). Over residues 791 to 823 (STSHSSETNQSTVRTPDTVIGQTEGSTGCSTSF) the composition is skewed to polar residues. Over residues 945–956 (SSLFSSSHYSEK) the composition is skewed to low complexity. Basic and acidic residues predominate over residues 1248–1260 (SGQQKLNGHEKSK). Positions 1271–1289 (EREELLQQIRSKTFNLRRT) constitute a WH2 domain. Residues 1289-1304 (TNASKTNTSSPTTANS) are compositionally biased toward low complexity.

Belongs to the SCAR/WAVE family.

It localises to the cytoplasm. The protein resides in the cytoskeleton. In terms of biological role, involved in regulation of actin and microtubule organization. Part of a WAVE complex that activates the Arp2/3 complex. This Oryza sativa subsp. japonica (Rice) protein is SCAR-like protein 2.